Here is a 190-residue protein sequence, read N- to C-terminus: Histone H5 (190 aa).

Residues 1–29 (MTESLVLSPAPAKPKRVKASRRSASHPTY) form a disordered region. Residues 13-24 (KPKRVKASRRSA) are compositionally biased toward basic residues. Phosphoserine occurs at positions 23, 30, 146, and 167. The region spanning 25–98 (SHPTYSEMIA…GASGSFRLAK (74 aa)) is the H15 domain. The disordered stretch occupies residues 87-190 (GVGASGSFRL…SGARKSPKKK (104 aa)). Over residues 104 to 190 (RSPGKKKKAV…SGARKSPKKK (87 aa)) the composition is skewed to basic residues.

The protein belongs to the histone H1/H5 family. Erythroid cells.

It is found in the nucleus. It localises to the chromosome. Histone H5 performs the same function as H1, being necessary for the condensation of nucleosome chains into higher order structures, and replaces histone H1 in certain cells. This Gallus gallus (Chicken) protein is Histone H5.